The primary structure comprises 356 residues: Phosphoribosylformylglycinamidine cyclo-ligase (356 aa).

This sequence belongs to the AIR synthase family.

Its subcellular location is the cytoplasm. It catalyses the reaction 2-formamido-N(1)-(5-O-phospho-beta-D-ribosyl)acetamidine + ATP = 5-amino-1-(5-phospho-beta-D-ribosyl)imidazole + ADP + phosphate + H(+). It participates in purine metabolism; IMP biosynthesis via de novo pathway; 5-amino-1-(5-phospho-D-ribosyl)imidazole from N(2)-formyl-N(1)-(5-phospho-D-ribosyl)glycinamide: step 2/2. This Sinorhizobium medicae (strain WSM419) (Ensifer medicae) protein is Phosphoribosylformylglycinamidine cyclo-ligase.